The sequence spans 1488 residues: MMHQGQTMMYPSVAHPIPPQLGNVNLNMASQYPQQQQNKLVAPRKSSNIKITDPNTNKEVVLGRPSPNVAAQPQQVSGVATQPMVYYTNPQQTSYNQSGTYYSGTAGVVPTGSQGRFGYPATQAGQSIPFMNPSMSNTVPASHKDNIAGPAPSGQSQLIGKPQGGLHMEKPVPSVKISMPAGRSDASKFRVADHAVQHRQKDNEVISGAMVSNKPVSEKESKAPSIPEKHSKESKAPSAVEKHPTAVTQPLPIQAAKPETDAATANSPSFLTGADEKKESLPMTDSLKDNKKNATRNDTKNLPQQPQSASPAEELKGQTSVKLGDDVVGHMETKSFDSEKVDLTSKVSGLTSATSESSISPILGKSEADSTSVNAADVPAMVISSAKLSSASTGEPQAVESLGVAAVKSKEIEITHQISPESSDGKIMSDSTENESHDFTVDLAEQASLATSKPGNSDATSFVTDPQELPKECTTSVPEDHSLMNTSHNKDTQTLSASVDASDVSEVNSGTSSESTSQSTNDKDIRSSIQETGLAVSGITPGMLPVNHSVASEGQVKHADGAKDESSTEQSSAVPTGSVRPLSREKPTAELARTKSTAGRKKKRKEMLSKADAAGSSDLYNAYKGPQEQSESVATSDGADSSSTVDGTHVLPEESEREVMCEDDGKKKVEPDDWEDAADMSTPKLQSSDSGNQASAVQLPDSDMTEANGRKKYSRDFLLTFAHQYSSLPVGIRMDTVTSTLFKDLAGKSYVIDREPHPSSARGSDRPTSRGDRRGPAMDDDKWLKSGVPYSPNRDAHMDLTNGPAINYRGGPGGAHGVLRNPRGALLVGPQSNAPQVPRSGSDADRWQQKGLIPSPVTPMQVMHKAEKKYVVGKVSDEEQAKQRQLKAILNKLTPQNFDKLFEQVKEVNIDNVSTLTGVISQIFDKALMEPTFCEMYANFCSHLAGALPDFSEDNEKITFKRLLLNKCQEEFERGEREEAEADKTEEEGEIKQTKEEREEKRVKARRRMLGNIRLIGELYKKRMLTERIMHECIKKLLGNYQNPDEENIEALCKLMSTIGEMIDHPKAKEHMDAYFDRMRNLSTSQLISSRVRFLLRDSIDLRKNKWQQRRKVDGPKKIDEVHRDAAQERHAQSSRSRGPVVSSLPRRGAPSMDYGSRGSAAPLVSPGPQQRGRGFGNQDIRYEQERHQFDRTVPLPQRSVKDEAITLGPQGGLARGMSLRGQPPVSNSELPSVVDQRRILSGPNGYNSVPSTTREDTSSRIPDRFSGRIATAAQSASSSHRPASQEGRSGNKSYSEEELREKSIATIREYYSAKDEKEVALCIEELNAPSFYPSLVSLWVNDSFERKDMERELLAKLFVGLYNGGYNLLSKPQLIEGLSSVLASLEDALSDSPRAAEYLGRLLARFVVEKILVLQDVGKLIEEGGEEPGHLVQEGIAADVLGAVLEWIRTEKGDSFLKEAKTSSNLKLEDFRPQHLKRSKLDAFMLT.

Disordered regions lie at residues 196–320 (VQHR…GQTS), 337–367 (DSEK…GKSE), and 415–707 (THQI…MTEA). Basic and acidic residues-rich tracts occupy residues 216–244 (VSEK…EKHP) and 274–299 (ADEK…RNDT). Composition is skewed to polar residues over residues 300-310 (KNLPQQPQSAS), 345-360 (SKVS…SSIS), 448-464 (SLAT…SFVT), and 473-495 (CTTS…TQTL). The segment covering 496–520 (SASVDASDVSEVNSGTSSESTSQST) has biased composition (low complexity). Residues 555–566 (QVKHADGAKDES) show a composition bias toward basic and acidic residues. Polar residues predominate over residues 627 to 646 (QEQSESVATSDGADSSSTVD). Over residues 651–671 (LPEESEREVMCEDDGKKKVEP) the composition is skewed to basic and acidic residues. Over residues 683-696 (PKLQSSDSGNQASA) the composition is skewed to polar residues. The EIF4E-binding stretch occupies residues 709–721 (GRKKYSRDFLLTF). Basic and acidic residues predominate over residues 753–784 (DREPHPSSARGSDRPTSRGDRRGPAMDDDKWL). 3 disordered regions span residues 753–795 (DREP…PNRD), 974–1000 (RGER…EREE), and 1107–1299 (WQQR…SEEE). Residues 883-1106 (QRQLKAILNK…RDSIDLRKNK (224 aa)) form the MIF4G domain. Residues 978–989 (EEAEADKTEEEG) show a composition bias toward acidic residues. Composition is skewed to basic and acidic residues over residues 990-1000 (EIKQTKEEREE), 1111-1132 (RKVD…ERHA), 1181-1191 (IRYEQERHQFD), and 1254-1267 (TRED…DRFS). The span at 1273–1294 (AAQSASSSHRPASQEGRSGNKS) shows a compositional bias: polar residues. In terms of domain architecture, MI spans 1299–1423 (ELREKSIATI…VLQDVGKLIE (125 aa)).

It belongs to the eukaryotic initiation factor 4G family. EIF4F is a multi-subunit complex, the composition of which varies with external and internal environmental conditions. It is composed of at least EIF4A, EIF4E and EIF4G. In higher plants two isoforms of EIF4F have been identified, named isoform EIF4F and isoform EIF(iso)4F. Isoform EIF4F has subunits p220 and p26, whereas isoform EIF(iso)4F has subunits p82 and p28.

In terms of biological role, component of the protein complex eIF4F, which is involved in the recognition of the mRNA cap, ATP-dependent unwinding of 5'-terminal secondary structure and recruitment of mRNA to the ribosome. The polypeptide is Eukaryotic translation initiation factor 4G (Triticum aestivum (Wheat)).